Here is a 440-residue protein sequence, read N- to C-terminus: Tryptophan synthase beta chain 2 (440 aa).

N6-(pyridoxal phosphate)lysine is present on Lys110.

This sequence belongs to the TrpB family. Tetramer of two alpha and two beta chains. It depends on pyridoxal 5'-phosphate as a cofactor.

It carries out the reaction (1S,2R)-1-C-(indol-3-yl)glycerol 3-phosphate + L-serine = D-glyceraldehyde 3-phosphate + L-tryptophan + H2O. It participates in amino-acid biosynthesis; L-tryptophan biosynthesis; L-tryptophan from chorismate: step 5/5. The beta subunit is responsible for the synthesis of L-tryptophan from indole and L-serine. The polypeptide is Tryptophan synthase beta chain 2 (trpB2) (Pyrococcus abyssi (strain GE5 / Orsay)).